Consider the following 313-residue polypeptide: Aspartate carbamoyltransferase catalytic subunit (313 aa).

Positions 66 and 67 each coordinate carbamoyl phosphate. Lys94 serves as a coordination point for L-aspartate. Residues Arg116, His144, and Gln147 each coordinate carbamoyl phosphate. Arg177 and Arg231 together coordinate L-aspartate. Carbamoyl phosphate is bound by residues Gly272 and Pro273.

Belongs to the aspartate/ornithine carbamoyltransferase superfamily. ATCase family. In terms of assembly, heterododecamer (2C3:3R2) of six catalytic PyrB chains organized as two trimers (C3), and six regulatory PyrI chains organized as three dimers (R2).

The catalysed reaction is carbamoyl phosphate + L-aspartate = N-carbamoyl-L-aspartate + phosphate + H(+). Its pathway is pyrimidine metabolism; UMP biosynthesis via de novo pathway; (S)-dihydroorotate from bicarbonate: step 2/3. Catalyzes the condensation of carbamoyl phosphate and aspartate to form carbamoyl aspartate and inorganic phosphate, the committed step in the de novo pyrimidine nucleotide biosynthesis pathway. The sequence is that of Aspartate carbamoyltransferase catalytic subunit from Pelagibacter ubique (strain HTCC1062).